A 379-amino-acid polypeptide reads, in one-letter code: Tetraacyldisaccharide 4'-kinase (379 aa).

Ala-63–Thr-70 serves as a coordination point for ATP.

It belongs to the LpxK family.

It carries out the reaction a lipid A disaccharide + ATP = a lipid IVA + ADP + H(+). Its pathway is glycolipid biosynthesis; lipid IV(A) biosynthesis; lipid IV(A) from (3R)-3-hydroxytetradecanoyl-[acyl-carrier-protein] and UDP-N-acetyl-alpha-D-glucosamine: step 6/6. Functionally, transfers the gamma-phosphate of ATP to the 4'-position of a tetraacyldisaccharide 1-phosphate intermediate (termed DS-1-P) to form tetraacyldisaccharide 1,4'-bis-phosphate (lipid IVA). This Anaeromyxobacter dehalogenans (strain 2CP-1 / ATCC BAA-258) protein is Tetraacyldisaccharide 4'-kinase.